Here is a 470-residue protein sequence, read N- to C-terminus: 4-O-methyltransferase 1 (470 aa).

S-adenosyl-L-methionine is bound by residues 274–275 (GG), D297, 328–329 (DC), and K344. Residue H348 is the Proton acceptor of the active site.

Belongs to the class I-like SAM-binding methyltransferase superfamily. Cation-independent O-methyltransferase family. COMT subfamily.

Functionally, S-adenosyl-L-methionine-dependent methyltransferase that preferentially catalyzes the methylation of 4-OH phenolic compounds like coniferyl alcohol, vanillyl alcohol and ferrulic acid. May play a role in promoting lignin degradation by methylating and inactivating free-hydroxyl phenolic compounds, products of lignin cleavage which are known inhibitors of lignin peroxidases. This chain is 4-O-methyltransferase 1, found in Phanerochaete chrysosporium (strain RP-78 / ATCC MYA-4764 / FGSC 9002) (White-rot fungus).